Here is a 234-residue protein sequence, read N- to C-terminus: Mannose/glucose-specific lectin Cramoll (234 aa).

Positions 8 and 10 each coordinate Mn(2+). Residues Asp-10, Tyr-12, Asn-14, and Asp-19 each contribute to the Ca(2+) site. Tyr-12 contributes to the a carbohydrate binding site. Mn(2+)-binding residues include Asp-19, His-24, and Ser-34. 99-100 (LY) serves as a coordination point for a carbohydrate. Position 205 (Asp-205) interacts with Ca(2+). Arg-225 serves as a coordination point for a carbohydrate.

Belongs to the leguminous lectin family. In terms of assembly, homotetramer. The alpha and beta chains are produced by partial proteolytic processing of the lectin precursor by an asparaginyl endopeptidase.

Glucose/D-mannose specific lectin. This chain is Mannose/glucose-specific lectin Cramoll, found in Cratylia mollis (Camaratu bean).